The primary structure comprises 1036 residues: Phytosulfokine receptor 2 (1036 aa).

The N-terminal stretch at 1–16 (MVIILLLVFFVGSSVS) is a signal peptide. N-linked (GlcNAc...) asparagine glycans are attached at residues N36 and N45. LRR repeat units follow at residues 89–111 (ELRV…ISKL), 113–136 (QLQV…SGLK), 137–159 (LIQS…GVFP), 160–182 (GLVM…LCSS), 185–207 (GIQV…YNCS), 209–231 (SIQQ…LYSI), 233–256 (ELEQ…SNLS), 257–279 (GLKS…FGNL), 281–303 (QLEH…LSQC), 305–326 (KLRV…NFTG), 329–351 (DLCV…LGHC), 353–375 (KMKI…FKNL), 377–398 (SLLF…MNVL), 403–423 (NLST…NNVT), 427–450 (NLAI…LNCK), 451–473 (KLEV…IGKM), and 475–498 (SLFY…TELK). N142, N165, and N205 each carry an N-linked (GlcNAc...) asparagine glycan. N-linked (GlcNAc...) asparagine glycans are attached at residues N251, N254, and N278. Residues N313 and N323 are each glycosylated (N-linked (GlcNAc...) asparagine). Residues N385, N403, and N421 are each glycosylated (N-linked (GlcNAc...) asparagine). 5 N-linked (GlcNAc...) asparagine glycosylation sites follow: N483, N504, N523, N549, and N571. LRR repeat units lie at residues 561–583 (ELHM…ISGL) and 585–606 (NLEV…SFQS). A helical membrane pass occupies residues 680–700 (IVVLTISLAIGITLLLSVILL). T751 carries the post-translational modification Phosphothreonine. In terms of domain architecture, Protein kinase spans 754–1025 (FSQANIIGCG…PLIEEVVTWL (272 aa)). ATP-binding positions include 760–768 (IGCGGFGLV) and K782. 2 positions are modified to phosphotyrosine: Y827 and Y867. D880 acts as the Proton acceptor in catalysis. Residue Y922 is modified to Phosphotyrosine. Residues 995–1020 (RTVLEMLEIACKCIDHEPRRRPLIEE) form an LRR 20 repeat.

Belongs to the protein kinase superfamily. Ser/Thr protein kinase family.

The protein localises to the cell membrane. The enzyme catalyses L-seryl-[protein] + ATP = O-phospho-L-seryl-[protein] + ADP + H(+). The catalysed reaction is L-threonyl-[protein] + ATP = O-phospho-L-threonyl-[protein] + ADP + H(+). Phytosulfokine receptor with a serine/threonine-protein kinase activity. This is Phytosulfokine receptor 2 (PSKR2) from Arabidopsis thaliana (Mouse-ear cress).